The following is a 474-amino-acid chain: tRNA-2-methylthio-N(6)-dimethylallyladenosine synthase (474 aa).

The MTTase N-terminal domain occupies 3 to 120 (KKLHIKTWGC…LPEMINHVQG (118 aa)). [4Fe-4S] cluster is bound by residues C12, C49, C83, C157, C161, and C164. One can recognise a Radical SAM core domain in the interval 143-375 (RAEGPTAFVS…QQRISQQAME (233 aa)). The 64-residue stretch at 378 to 441 (RKMVGTVQRV…ASSLRGILLR (64 aa)) folds into the TRAM domain.

It belongs to the methylthiotransferase family. MiaB subfamily. As to quaternary structure, monomer. It depends on [4Fe-4S] cluster as a cofactor.

It localises to the cytoplasm. It catalyses the reaction N(6)-dimethylallyladenosine(37) in tRNA + (sulfur carrier)-SH + AH2 + 2 S-adenosyl-L-methionine = 2-methylsulfanyl-N(6)-dimethylallyladenosine(37) in tRNA + (sulfur carrier)-H + 5'-deoxyadenosine + L-methionine + A + S-adenosyl-L-homocysteine + 2 H(+). Functionally, catalyzes the methylthiolation of N6-(dimethylallyl)adenosine (i(6)A), leading to the formation of 2-methylthio-N6-(dimethylallyl)adenosine (ms(2)i(6)A) at position 37 in tRNAs that read codons beginning with uridine. In Yersinia pseudotuberculosis serotype O:1b (strain IP 31758), this protein is tRNA-2-methylthio-N(6)-dimethylallyladenosine synthase.